The sequence spans 255 residues: Indole-3-glycerol phosphate synthase (255 aa).

The protein belongs to the TrpC family.

It carries out the reaction 1-(2-carboxyphenylamino)-1-deoxy-D-ribulose 5-phosphate + H(+) = (1S,2R)-1-C-(indol-3-yl)glycerol 3-phosphate + CO2 + H2O. The protein operates within amino-acid biosynthesis; L-tryptophan biosynthesis; L-tryptophan from chorismate: step 4/5. The protein is Indole-3-glycerol phosphate synthase of Streptococcus thermophilus (strain CNRZ 1066).